Consider the following 152-residue polypeptide: Deoxyuridine 5'-triphosphate nucleotidohydrolase (152 aa).

Substrate-binding positions include 71–73, asparagine 84, 88–90, and methionine 98; these read RSG and LID.

This sequence belongs to the dUTPase family. It depends on Mg(2+) as a cofactor.

It catalyses the reaction dUTP + H2O = dUMP + diphosphate + H(+). Its pathway is pyrimidine metabolism; dUMP biosynthesis; dUMP from dCTP (dUTP route): step 2/2. Functionally, this enzyme is involved in nucleotide metabolism: it produces dUMP, the immediate precursor of thymidine nucleotides and it decreases the intracellular concentration of dUTP so that uracil cannot be incorporated into DNA. This is Deoxyuridine 5'-triphosphate nucleotidohydrolase from Shewanella baltica (strain OS185).